Here is a 291-residue protein sequence, read N- to C-terminus: tRNA U34 carboxymethyltransferase (291 aa).

Carboxy-S-adenosyl-L-methionine contacts are provided by residues Lys61, Trp75, Lys80, Gly100, 122–124 (DPS), 149–150 (VE), Tyr169, and Arg284.

Belongs to the class I-like SAM-binding methyltransferase superfamily. CmoB family. As to quaternary structure, homotetramer.

The enzyme catalyses carboxy-S-adenosyl-L-methionine + 5-hydroxyuridine(34) in tRNA = 5-carboxymethoxyuridine(34) in tRNA + S-adenosyl-L-homocysteine + H(+). Its function is as follows. Catalyzes carboxymethyl transfer from carboxy-S-adenosyl-L-methionine (Cx-SAM) to 5-hydroxyuridine (ho5U) to form 5-carboxymethoxyuridine (cmo5U) at position 34 in tRNAs. This Campylobacter jejuni (strain RM1221) protein is tRNA U34 carboxymethyltransferase.